The chain runs to 305 residues: Homoserine kinase (305 aa).

ATP is bound at residue 93-103 (PLARGLGSSAT).

Belongs to the GHMP kinase family. Homoserine kinase subfamily.

It localises to the cytoplasm. The enzyme catalyses L-homoserine + ATP = O-phospho-L-homoserine + ADP + H(+). The protein operates within amino-acid biosynthesis; L-threonine biosynthesis; L-threonine from L-aspartate: step 4/5. In terms of biological role, catalyzes the ATP-dependent phosphorylation of L-homoserine to L-homoserine phosphate. This is Homoserine kinase from Trichodesmium erythraeum (strain IMS101).